Here is a 109-residue protein sequence, read N- to C-terminus: Cell cycle protein GpsB (109 aa).

Residues 36–63 (IKDYETYAALVKSLRQEIADLKEELTRK) adopt a coiled-coil conformation.

Belongs to the GpsB family. As to quaternary structure, forms polymers through the coiled coil domains. Interacts with PBP1, MreC and EzrA.

It localises to the cytoplasm. Divisome component that associates with the complex late in its assembly, after the Z-ring is formed, and is dependent on DivIC and PBP2B for its recruitment to the divisome. Together with EzrA, is a key component of the system that regulates PBP1 localization during cell cycle progression. Its main role could be the removal of PBP1 from the cell pole after pole maturation is completed. Also contributes to the recruitment of PBP1 to the division complex. Not essential for septum formation. This chain is Cell cycle protein GpsB, found in Streptococcus pneumoniae serotype 4 (strain ATCC BAA-334 / TIGR4).